The primary structure comprises 710 residues: Ribonuclease R (710 aa).

The 328-residue stretch at 246–573 (RKDLRDKVIV…VHRLLKLYLE (328 aa)) folds into the RNB domain. One can recognise an S1 motif domain in the interval 625–705 (GEVFNVVVTN…IRGEIDFVLV (81 aa)).

The protein belongs to the RNR ribonuclease family. RNase R subfamily.

The protein localises to the cytoplasm. The enzyme catalyses Exonucleolytic cleavage in the 3'- to 5'-direction to yield nucleoside 5'-phosphates.. 3'-5' exoribonuclease that releases 5'-nucleoside monophosphates and is involved in maturation of structured RNAs. The protein is Ribonuclease R of Thermotoga maritima (strain ATCC 43589 / DSM 3109 / JCM 10099 / NBRC 100826 / MSB8).